A 287-amino-acid polypeptide reads, in one-letter code: Diaminopimelate epimerase (287 aa).

The substrate site is built by Asn15 and Asn66. Cys75 serves as the catalytic Proton donor. Residues 76 to 77 (GN), Asn170, Asn203, and 221 to 222 (ER) each bind substrate. Cys230 serves as the catalytic Proton acceptor. 231–232 (GT) lines the substrate pocket.

The protein belongs to the diaminopimelate epimerase family. Homodimer.

The protein resides in the cytoplasm. It catalyses the reaction (2S,6S)-2,6-diaminopimelate = meso-2,6-diaminopimelate. Its pathway is amino-acid biosynthesis; L-lysine biosynthesis via DAP pathway; DL-2,6-diaminopimelate from LL-2,6-diaminopimelate: step 1/1. Its function is as follows. Catalyzes the stereoinversion of LL-2,6-diaminopimelate (L,L-DAP) to meso-diaminopimelate (meso-DAP), a precursor of L-lysine and an essential component of the bacterial peptidoglycan. The polypeptide is Diaminopimelate epimerase (Desulfovibrio desulfuricans (strain ATCC 27774 / DSM 6949 / MB)).